The chain runs to 176 residues: Large ribosomal subunit protein uL6 (176 aa).

It belongs to the universal ribosomal protein uL6 family. As to quaternary structure, part of the 50S ribosomal subunit.

This protein binds to the 23S rRNA, and is important in its secondary structure. It is located near the subunit interface in the base of the L7/L12 stalk, and near the tRNA binding site of the peptidyltransferase center. The polypeptide is Large ribosomal subunit protein uL6 (Lacticaseibacillus paracasei (strain ATCC 334 / BCRC 17002 / CCUG 31169 / CIP 107868 / KCTC 3260 / NRRL B-441) (Lactobacillus paracasei)).